The primary structure comprises 415 residues: ATP-dependent Clp protease ATP-binding subunit ClpX (415 aa).

The 54-residue stretch at 1-54 (MARNRMGGALICSFCNKPESSERFVVPGPGGIAICDRCVDLCESYIKSYKTVRP) folds into the ClpX-type ZB domain. Zn(2+) contacts are provided by Cys12, Cys15, Cys35, and Cys38. 117 to 124 (PTGSGKTL) contributes to the ATP binding site.

This sequence belongs to the ClpX chaperone family. In terms of assembly, component of the ClpX-ClpP complex. Forms a hexameric ring that, in the presence of ATP, binds to fourteen ClpP subunits assembled into a disk-like structure with a central cavity, resembling the structure of eukaryotic proteasomes.

ATP-dependent specificity component of the Clp protease. It directs the protease to specific substrates. Can perform chaperone functions in the absence of ClpP. This is ATP-dependent Clp protease ATP-binding subunit ClpX from Treponema denticola (strain ATCC 35405 / DSM 14222 / CIP 103919 / JCM 8153 / KCTC 15104).